We begin with the raw amino-acid sequence, 340 residues long: ATP-dependent 6-phosphofructokinase (340 aa).

Gly11 serves as a coordination point for ATP. 21 to 25 (RAVVR) lines the ADP pocket. ATP-binding positions include 72-73 (RY) and 102-105 (GDGS). Asp103 lines the Mg(2+) pocket. Residue 125–127 (TID) coordinates substrate. The Proton acceptor role is filled by Asp127. Arg154 contributes to the ADP binding site. Substrate contacts are provided by residues Arg162 and 169–171 (MGR). Residues 185 to 187 (GAD), Lys211, and 213 to 215 (KNH) each bind ADP. Substrate-binding positions include Glu222, Arg244, and 250–253 (HIQR).

It belongs to the phosphofructokinase type A (PFKA) family. ATP-dependent PFK group I subfamily. Prokaryotic clade 'B1' sub-subfamily. Homotetramer. Requires Mg(2+) as cofactor.

The protein resides in the cytoplasm. The catalysed reaction is beta-D-fructose 6-phosphate + ATP = beta-D-fructose 1,6-bisphosphate + ADP + H(+). It functions in the pathway carbohydrate degradation; glycolysis; D-glyceraldehyde 3-phosphate and glycerone phosphate from D-glucose: step 3/4. Allosterically activated by ADP and other diphosphonucleosides, and allosterically inhibited by phosphoenolpyruvate. In terms of biological role, catalyzes the phosphorylation of D-fructose 6-phosphate to fructose 1,6-bisphosphate by ATP, the first committing step of glycolysis. This Lactococcus lactis subsp. lactis (Streptococcus lactis) protein is ATP-dependent 6-phosphofructokinase.